Here is a 67-residue protein sequence, read N- to C-terminus: Putative cytosolic sulfotransferase 2 (67 aa).

31–33 (RDG) lines the 3'-phosphoadenylyl sulfate pocket.

This sequence belongs to the sulfotransferase 1 family.

Its subcellular location is the cytoplasm. In terms of biological role, sulfotransferase that utilizes 3'-phospho-5'-adenylyl sulfate (PAPS) as sulfonate donor. This chain is Putative cytosolic sulfotransferase 2 (SOT2), found in Arabidopsis thaliana (Mouse-ear cress).